Reading from the N-terminus, the 445-residue chain is Tubby-like F-box protein 8 (445 aa).

In terms of domain architecture, F-box spans 56 to 102 (ESRWASLPPELLRDVIRRLEASESTWPSRKDVVSCAAVCKAWREMCK).

It belongs to the TUB family. As to expression, ubiquitous.

This Oryza sativa subsp. japonica (Rice) protein is Tubby-like F-box protein 8 (TULP8).